Here is a 139-residue protein sequence, read N- to C-terminus: FAD synthase (139 aa).

ATP is bound by residues 9–10 (TF), 14–17 (HPGH), and Asn92.

Belongs to the archaeal FAD synthase family. Homodimer. Requires a divalent metal cation as cofactor.

It catalyses the reaction FMN + ATP + H(+) = FAD + diphosphate. It participates in cofactor biosynthesis; FAD biosynthesis; FAD from FMN: step 1/1. Catalyzes the transfer of the AMP portion of ATP to flavin mononucleotide (FMN) to produce flavin adenine dinucleotide (FAD) coenzyme. In Methanocella paludicola (strain DSM 17711 / JCM 13418 / NBRC 101707 / SANAE), this protein is FAD synthase.